The following is a 1409-amino-acid chain: DNA-directed RNA polymerase subunit beta' (1409 aa).

Positions 70, 72, 85, and 88 each coordinate Zn(2+). 3 residues coordinate Mg(2+): Asp458, Asp460, and Asp462. Positions 813, 887, 894, and 897 each coordinate Zn(2+). Residues 1385–1403 (EAAELAGSTSDVSTTADAS) are compositionally biased toward low complexity. Positions 1385-1409 (EAAELAGSTSDVSTTADASEGAASE) are disordered.

Belongs to the RNA polymerase beta' chain family. As to quaternary structure, the RNAP catalytic core consists of 2 alpha, 1 beta, 1 beta' and 1 omega subunit. When a sigma factor is associated with the core the holoenzyme is formed, which can initiate transcription. Requires Mg(2+) as cofactor. Zn(2+) is required as a cofactor.

The enzyme catalyses RNA(n) + a ribonucleoside 5'-triphosphate = RNA(n+1) + diphosphate. Functionally, DNA-dependent RNA polymerase catalyzes the transcription of DNA into RNA using the four ribonucleoside triphosphates as substrates. The protein is DNA-directed RNA polymerase subunit beta' of Variovorax paradoxus (strain S110).